The sequence spans 779 residues: Lon protease (779 aa).

The Lon N-terminal domain maps to 7–190 (VPVLFLNDSI…LLIGWTGDHL (184 aa)). 352-359 (GPPGVGKT) lines the ATP pocket. The 181-residue stretch at 589–769 (TAVPGVATGL…ADIIAAALEP (181 aa)) folds into the Lon proteolytic domain. Catalysis depends on residues Ser675 and Lys718.

The protein belongs to the peptidase S16 family. As to quaternary structure, homohexamer. Organized in a ring with a central cavity. Oligomerization is Mg(2+)-dependent.

The protein localises to the cytoplasm. It carries out the reaction Hydrolysis of proteins in presence of ATP.. Its activity is regulated as follows. Stimulated by unfolded protein. Functionally, ATP-dependent serine protease that mediates the selective degradation of mutant and abnormal proteins as well as certain short-lived regulatory proteins. Required for cellular homeostasis and for survival from DNA damage and developmental changes induced by stress. Degrades polypeptides processively to yield small peptide fragments that are 5 to 10 amino acids long. Binds to DNA in a double-stranded, site-specific manner. The chain is Lon protease from Mycolicibacterium smegmatis (Mycobacterium smegmatis).